The following is a 434-amino-acid chain: Pre-mRNA-splicing factor PRP46 (434 aa).

7 WD repeats span residues 120–160 (GHTG…LKIT), 163–202 (GHVM…AIRD), 205–244 (GHLS…EIMV), 247–288 (GHKS…KVLT), 290–329 (HSRN…TNFQ), 331–369 (QNTG…KYQS), and 380–419 (ESER…TEDT).

This sequence belongs to the WD repeat PRL1/PRL2 family. As to quaternary structure, associated with the spliceosome.

The protein localises to the cytoplasm. Its subcellular location is the nucleus. Its function is as follows. Involved in pre-mRNA splicing and required for cell cycle progression at G2/M. The sequence is that of Pre-mRNA-splicing factor PRP46 (PRP46) from Kluyveromyces lactis (strain ATCC 8585 / CBS 2359 / DSM 70799 / NBRC 1267 / NRRL Y-1140 / WM37) (Yeast).